The primary structure comprises 110 residues: Red pigment-concentrating prohormone (110 aa).

Residues M1–A25 form the signal peptide. Q26 is modified (pyrrolidone carboxylic acid). W33 is subject to Tryptophan amide.

It belongs to the AKH/HRTH/RPCH family.

It is found in the secreted. Functionally, this hormone adapts the animal to light backgrounds by stimulating concentration of the pigment of its red body-chromatophores. The sequence is that of Red pigment-concentrating prohormone from Carcinus maenas (Common shore crab).